A 71-amino-acid polypeptide reads, in one-letter code: Protein translocase subunit SecE (71 aa).

The chain crosses the membrane as a helical span at residues 43–63; that stretch reads VAGVGILAVGAIGFIIYVLLT.

The protein belongs to the SecE/SEC61-gamma family. As to quaternary structure, component of the Sec protein translocase complex. Heterotrimer consisting of SecY (alpha), SecG (beta) and SecE (gamma) subunits. The heterotrimers can form oligomers, although 1 heterotrimer is thought to be able to translocate proteins. Interacts with the ribosome. May interact with SecDF, and other proteins may be involved.

The protein resides in the cell membrane. In terms of biological role, essential subunit of the Sec protein translocation channel SecYEG. Clamps together the 2 halves of SecY. May contact the channel plug during translocation. This chain is Protein translocase subunit SecE, found in Methanosarcina barkeri (strain Fusaro / DSM 804).